The sequence spans 289 residues: 4-hydroxy-tetrahydrodipicolinate synthase (289 aa).

Thr-46 contributes to the pyruvate binding site. Residue Tyr-134 is the Proton donor/acceptor of the active site. The active-site Schiff-base intermediate with substrate is the Lys-162. Val-204 is a pyruvate binding site.

The protein belongs to the DapA family. In terms of assembly, homotetramer; dimer of dimers.

It is found in the cytoplasm. It carries out the reaction L-aspartate 4-semialdehyde + pyruvate = (2S,4S)-4-hydroxy-2,3,4,5-tetrahydrodipicolinate + H2O + H(+). Its pathway is amino-acid biosynthesis; L-lysine biosynthesis via DAP pathway; (S)-tetrahydrodipicolinate from L-aspartate: step 3/4. Its function is as follows. Catalyzes the condensation of (S)-aspartate-beta-semialdehyde [(S)-ASA] and pyruvate to 4-hydroxy-tetrahydrodipicolinate (HTPA). The chain is 4-hydroxy-tetrahydrodipicolinate synthase from Bacillus velezensis (strain DSM 23117 / BGSC 10A6 / LMG 26770 / FZB42) (Bacillus amyloliquefaciens subsp. plantarum).